The chain runs to 185 residues: MGQQVLKSSNEKMEKAVAAYSRELATVRAGRANASVLDKVQVDYYGAPTPVVQLANITVPEARLLVIQPYDKTSIGDIEKAILKADLGLNPSNDGTVIRIAFPALTEERRRDLVKVVKKYAEEAKVAVRNVRRDGNDDLKKLEKAGEITEDDLRGYTEDIQKETDKYIAKVDEIAKNKEKEIMEV.

This sequence belongs to the RRF family.

Its subcellular location is the cytoplasm. In terms of biological role, responsible for the release of ribosomes from messenger RNA at the termination of protein biosynthesis. May increase the efficiency of translation by recycling ribosomes from one round of translation to another. The sequence is that of Ribosome-recycling factor from Bacillus cereus (strain B4264).